Reading from the N-terminus, the 208-residue chain is Uracil phosphoribosyltransferase (208 aa).

5-phospho-alpha-D-ribose 1-diphosphate contacts are provided by residues R78, R103, and 130 to 138; that span reads DPMLATGGS. Uracil is bound by residues I193 and 198 to 200; that span reads GDA. A 5-phospho-alpha-D-ribose 1-diphosphate-binding site is contributed by D199.

Belongs to the UPRTase family. It depends on Mg(2+) as a cofactor.

It catalyses the reaction UMP + diphosphate = 5-phospho-alpha-D-ribose 1-diphosphate + uracil. Its pathway is pyrimidine metabolism; UMP biosynthesis via salvage pathway; UMP from uracil: step 1/1. With respect to regulation, allosterically activated by GTP. In terms of biological role, catalyzes the conversion of uracil and 5-phospho-alpha-D-ribose 1-diphosphate (PRPP) to UMP and diphosphate. The chain is Uracil phosphoribosyltransferase from Neisseria meningitidis serogroup A / serotype 4A (strain DSM 15465 / Z2491).